The primary structure comprises 161 residues: Decarboxylase (161 aa).

The EthD domain maps to 29–131 (QGMSEEAYRK…VGDHENFADT (103 aa)).

This sequence belongs to the tpcK family.

It catalyses the reaction atrochrysone carboxylate + H(+) = atrochrysone + CO2. Its pathway is secondary metabolite biosynthesis. In terms of biological role, decarboxylase; part of the gene cluster that mediates the biosynthesis of monodictyphenone, a prenyl xanthone derivative. The pathway begins with the synthesis of atrochrysone thioester by the polyketide synthase (PKS) mdpG. The atrochrysone carboxyl ACP thioesterase mdpF then breaks the thioester bond and releases the atrochrysone carboxylic acid from mdpG. The atrochrysone carboxylic acid is then converted to atrochrysone which is further transformed into emodin anthrone by mdpH-1 and mdpH-2. Emodin is further modified to yield monodictyphenone via several steps involving mdpB, mdpC mdpJ, mdpK and mdpL. These enzymes with xptA, xptB and xptC are also proposed to be involved in the synthesis of shamixanthone from emodin. Especially, direct reduction of emodin by the short chain dehydrogenase mdpC followed by dehydration catalyzed by the scytalone dehydratase-like protein mdpB gives loss of oxygen and formation of chrysophanol intermediate in two simple steps. The protein is Decarboxylase of Emericella nidulans (strain FGSC A4 / ATCC 38163 / CBS 112.46 / NRRL 194 / M139) (Aspergillus nidulans).